Here is a 481-residue protein sequence, read N- to C-terminus: Histidine--tRNA ligase, cytoplasmic (481 aa).

A disordered region spans residues 1–48; the sequence is MSEPVVDNVTNKVEKMEVKEKTSAPPKEKKEKKSNKVQLKTPKGTQDY. Over residues 12-31 the composition is skewed to basic and acidic residues; it reads KVEKMEVKEKTSAPPKEKKE.

This sequence belongs to the class-II aminoacyl-tRNA synthetase family.

The protein resides in the cytoplasm. The enzyme catalyses tRNA(His) + L-histidine + ATP = L-histidyl-tRNA(His) + AMP + diphosphate + H(+). This Dictyostelium discoideum (Social amoeba) protein is Histidine--tRNA ligase, cytoplasmic (hisS).